A 445-amino-acid chain; its full sequence is Argininosuccinate synthase (445 aa).

Residues 17-25 (AFSGGLDTS) and Ala-43 contribute to the ATP site. Residue Tyr-99 coordinates L-citrulline. Residues Gly-129 and Thr-131 each contribute to the ATP site. 3 residues coordinate L-aspartate: Thr-131, Asn-135, and Asp-136. L-citrulline is bound at residue Asn-135. Asp-136 contacts ATP. The L-citrulline site is built by Arg-139 and Ser-192. Asp-194 lines the ATP pocket. The L-citrulline site is built by Thr-201, Glu-203, and Glu-280.

This sequence belongs to the argininosuccinate synthase family. Type 2 subfamily. Homotetramer.

It localises to the cytoplasm. The catalysed reaction is L-citrulline + L-aspartate + ATP = 2-(N(omega)-L-arginino)succinate + AMP + diphosphate + H(+). The protein operates within amino-acid biosynthesis; L-arginine biosynthesis; L-arginine from L-ornithine and carbamoyl phosphate: step 2/3. The polypeptide is Argininosuccinate synthase (Bradyrhizobium sp. (strain BTAi1 / ATCC BAA-1182)).